Consider the following 873-residue polypeptide: DNA mismatch repair protein MutS (873 aa).

628–635 contributes to the ATP binding site; the sequence is GPNMAGKS.

The protein belongs to the DNA mismatch repair MutS family.

This protein is involved in the repair of mismatches in DNA. It is possible that it carries out the mismatch recognition step. This protein has a weak ATPase activity. In Chlorobium chlorochromatii (strain CaD3), this protein is DNA mismatch repair protein MutS.